A 355-amino-acid polypeptide reads, in one-letter code: DNA polymerase IV (355 aa).

The 182-residue stretch at 6-187 (IIHVDMDAFY…LPVGKIHGVG (182 aa)) folds into the UmuC domain. Mg(2+)-binding residues include D10 and D105. E106 is an active-site residue.

The protein belongs to the DNA polymerase type-Y family. In terms of assembly, monomer. It depends on Mg(2+) as a cofactor.

The protein resides in the cytoplasm. It carries out the reaction DNA(n) + a 2'-deoxyribonucleoside 5'-triphosphate = DNA(n+1) + diphosphate. Its function is as follows. Poorly processive, error-prone DNA polymerase involved in untargeted mutagenesis. Copies undamaged DNA at stalled replication forks, which arise in vivo from mismatched or misaligned primer ends. These misaligned primers can be extended by PolIV. Exhibits no 3'-5' exonuclease (proofreading) activity. May be involved in translesional synthesis, in conjunction with the beta clamp from PolIII. The protein is DNA polymerase IV of Alkalilimnicola ehrlichii (strain ATCC BAA-1101 / DSM 17681 / MLHE-1).